We begin with the raw amino-acid sequence, 152 residues long: Large ribosomal subunit protein bL9 (152 aa).

It belongs to the bacterial ribosomal protein bL9 family.

In terms of biological role, binds to the 23S rRNA. This Synechococcus sp. (strain RCC307) protein is Large ribosomal subunit protein bL9.